The following is a 427-amino-acid chain: Glutamyl-tRNA reductase (427 aa).

Substrate is bound by residues 50–53 (TCNR), Ser110, 115–117 (ETQ), and Gln121. The Nucleophile role is filled by Cys51. 190 to 195 (GAGEMG) lines the NADP(+) pocket.

It belongs to the glutamyl-tRNA reductase family. Homodimer.

It catalyses the reaction (S)-4-amino-5-oxopentanoate + tRNA(Glu) + NADP(+) = L-glutamyl-tRNA(Glu) + NADPH + H(+). It participates in porphyrin-containing compound metabolism; protoporphyrin-IX biosynthesis; 5-aminolevulinate from L-glutamyl-tRNA(Glu): step 1/2. Functionally, catalyzes the NADPH-dependent reduction of glutamyl-tRNA(Glu) to glutamate 1-semialdehyde (GSA). This is Glutamyl-tRNA reductase from Campylobacter concisus (strain 13826).